The primary structure comprises 340 residues: NADPH dehydrogenase (340 aa).

Residue 23-26 (SPMC) participates in FMN binding. Position 28 (Tyr-28) interacts with substrate. FMN contacts are provided by Ala-60 and Gln-102. 164 to 167 (HGAH) contacts substrate. FMN is bound by residues Arg-215 and 307–308 (AR).

This sequence belongs to the NADH:flavin oxidoreductase/NADH oxidase family. NamA subfamily. In terms of assembly, homotetramer. The cofactor is FMN.

It catalyses the reaction A + NADPH + H(+) = AH2 + NADP(+). Its function is as follows. Catalyzes the reduction of the double bond of an array of alpha,beta-unsaturated aldehydes and ketones. It also reduces the nitro group of nitroester and nitroaromatic compounds. It could have a role in detoxification processes. This chain is NADPH dehydrogenase, found in Geobacillus sp. (strain WCH70).